The following is a 313-amino-acid chain: DNA-directed RNA polymerase subunit alpha (313 aa).

The alpha N-terminal domain (alpha-NTD) stretch occupies residues 1–229; that stretch reads MNSSNLLMEC…NLFKSIGEQK (229 aa). The alpha C-terminal domain (alpha-CTD) stretch occupies residues 243-313; the sequence is IKPIDPYTHI…LKNKLGIVLK (71 aa).

It belongs to the RNA polymerase alpha chain family. As to quaternary structure, in plastids the minimal PEP RNA polymerase catalytic core is composed of four subunits: alpha, beta, beta', and beta''. When a (nuclear-encoded) sigma factor is associated with the core the holoenzyme is formed, which can initiate transcription.

It localises to the plastid. It is found in the chloroplast. The catalysed reaction is RNA(n) + a ribonucleoside 5'-triphosphate = RNA(n+1) + diphosphate. In terms of biological role, DNA-dependent RNA polymerase catalyzes the transcription of DNA into RNA using the four ribonucleoside triphosphates as substrates. The polypeptide is DNA-directed RNA polymerase subunit alpha (Thalassiosira pseudonana (Marine diatom)).